The primary structure comprises 305 residues: GMP synthase [glutamine-hydrolyzing] subunit B (305 aa).

One can recognise a GMPS ATP-PPase domain in the interval valine 2–arginine 184. Serine 29 to serine 35 serves as a coordination point for ATP.

As to quaternary structure, heterodimer composed of a glutamine amidotransferase subunit (A) and a GMP-binding subunit (B).

It carries out the reaction XMP + L-glutamine + ATP + H2O = GMP + L-glutamate + AMP + diphosphate + 2 H(+). The protein operates within purine metabolism; GMP biosynthesis; GMP from XMP (L-Gln route): step 1/1. Functionally, catalyzes the synthesis of GMP from XMP. The chain is GMP synthase [glutamine-hydrolyzing] subunit B from Methanocella arvoryzae (strain DSM 22066 / NBRC 105507 / MRE50).